Here is a 419-residue protein sequence, read N- to C-terminus: UDP-N-acetylglucosamine 1-carboxyvinyltransferase (419 aa).

22 to 23 provides a ligand contact to phosphoenolpyruvate; it reads KN. A UDP-N-acetyl-alpha-D-glucosamine-binding site is contributed by Arg91. The Proton donor role is filled by Cys115. Cys115 carries the post-translational modification 2-(S-cysteinyl)pyruvic acid O-phosphothioketal. Residues 120-124, 160-163, Asp305, and Ile327 each bind UDP-N-acetyl-alpha-D-glucosamine; these read RPVDL and KVSV.

The protein belongs to the EPSP synthase family. MurA subfamily.

It localises to the cytoplasm. It carries out the reaction phosphoenolpyruvate + UDP-N-acetyl-alpha-D-glucosamine = UDP-N-acetyl-3-O-(1-carboxyvinyl)-alpha-D-glucosamine + phosphate. Its pathway is cell wall biogenesis; peptidoglycan biosynthesis. Cell wall formation. Adds enolpyruvyl to UDP-N-acetylglucosamine. This Serratia proteamaculans (strain 568) protein is UDP-N-acetylglucosamine 1-carboxyvinyltransferase.